Consider the following 642-residue polypeptide: Regulator of MON1-CCZ1 complex (642 aa).

The Mic1 domain occupies 462-616 (RPYTESILML…KLYETLSFPK (155 aa)).

Belongs to the RMC1 family. In terms of assembly, component of the Mon1-Ccz1 guanyl-nucleotide exchange factor complex made up of Mon1, Ccz1 and Bulli; the interaction of Bulli with the Mon1-Ccz1 heterodimer is mediated via the C-terminal Mic1 domain of Bulli. Mon1 and Ccz1 form a stable complex which displays Rab7 GEF activity with or without Bulli; GEF activity is enhanced by Bulli possibly by improving membrane association of the complex.

The protein localises to the late endosome. In terms of biological role, positive regulator of the Rab7 guanyl-nucleotide exchange activity of the Mon1-Ccz1 complex, possibly by enhancing its endosomal membrane association. As part of the Mon1-Ccz1 complex involved in endolysosomal biogenesis possibly by mediating Rab conversion, the replacement of Rab5 with Rab7 during late endosome maturation. This is Regulator of MON1-CCZ1 complex from Drosophila melanogaster (Fruit fly).